The primary structure comprises 408 residues: Phosphoglycerate kinase (408 aa).

Residues 24–26 (DLN), Arg-39, 62–65 (HLGR), Arg-121, and Arg-161 contribute to the substrate site. ATP contacts are provided by residues Lys-211, Gly-307, Glu-338, and 364-367 (GGDS).

This sequence belongs to the phosphoglycerate kinase family. Monomer.

It is found in the cytoplasm. The catalysed reaction is (2R)-3-phosphoglycerate + ATP = (2R)-3-phospho-glyceroyl phosphate + ADP. The protein operates within carbohydrate degradation; glycolysis; pyruvate from D-glyceraldehyde 3-phosphate: step 2/5. The chain is Phosphoglycerate kinase from Paenarthrobacter aurescens (strain TC1).